The primary structure comprises 444 residues: Abhydrolase domain-containing protein abhd-5.2 (444 aa).

The AB hydrolase-1 domain maps to 162–409; that stretch reads PIVLIHGFGA…SAGHHVYADD (248 aa).

Belongs to the peptidase S33 family. ABHD4/ABHD5 subfamily. Interacts with atgl-1; the interaction tethers atgl-1 to lipid droplets. Expressed in the hypodermis and intestine.

The protein resides in the lipid droplet. In terms of biological role, acts coordinately with phospholipase atgl-1 within the lipolytic cascade to distribute stored energy to tissues to maintain energy levels during the dauer phase. Localizes atgl-1 to lipid droplets, possibly to facilitate triglyceride hydrolysis. Regulates lipid droplet size, lipid content, the exchange of lipids between lipid droplets and fusion of lipid droplets during the dauer phase. This chain is Abhydrolase domain-containing protein abhd-5.2, found in Caenorhabditis elegans.